A 469-amino-acid chain; its full sequence is tRNA modification GTPase MnmE (469 aa).

(6S)-5-formyl-5,6,7,8-tetrahydrofolate is bound by residues Arg-38, Glu-95, and Arg-134. The 163-residue stretch at 230-392 (GIRVALVGPP…LRRGLAALVD (163 aa)) folds into the TrmE-type G domain. Residues 240-245 (NAGKSS), 259-265 (SAQAGTT), and 284-287 (DTAG) each bind GTP. Positions 244 and 265 each coordinate Mg(2+). Residue Lys-468 participates in (6S)-5-formyl-5,6,7,8-tetrahydrofolate binding.

The protein belongs to the TRAFAC class TrmE-Era-EngA-EngB-Septin-like GTPase superfamily. TrmE GTPase family. As to quaternary structure, homodimer. Heterotetramer of two MnmE and two MnmG subunits. K(+) is required as a cofactor.

The protein localises to the cytoplasm. Functionally, exhibits a very high intrinsic GTPase hydrolysis rate. Involved in the addition of a carboxymethylaminomethyl (cmnm) group at the wobble position (U34) of certain tRNAs, forming tRNA-cmnm(5)s(2)U34. In Halorhodospira halophila (strain DSM 244 / SL1) (Ectothiorhodospira halophila (strain DSM 244 / SL1)), this protein is tRNA modification GTPase MnmE.